Reading from the N-terminus, the 650-residue chain is Pentatricopeptide repeat-containing protein At2g41080 (650 aa).

PPR repeat units follow at residues 43-77 (NTSL…GFSS), 78-112 (DKFI…NYMS), 114-139 (NILI…MPDR), 140-174 (KLTT…GFSP), 175-209 (DEYT…GLEL), 210-240 (DLVV…MPVR), 241-275 (NLVA…GCRP), 276-310 (NKIT…GASS), 311-341 (VVAV…REDE), 342-372 (DEVM…MAEQ), 378-413 (NEVA…GFKP), and 414-444 (GLKH…MPIK). Residues 449–524 (IWKTLLSACN…EAGISWFEHK (76 aa)) are type E motif. The segment at 525-555 (GEVHQFKMGDRSQSKSKEIYSYLKELTLEMK) is type E(+) motif. Positions 556 to 650 (LKGYKPDTAS…NGKCSCGDYW (95 aa)) are type DYW motif.

Belongs to the PPR family. PCMP-H subfamily.

This is Pentatricopeptide repeat-containing protein At2g41080 (PCMP-H29) from Arabidopsis thaliana (Mouse-ear cress).